We begin with the raw amino-acid sequence, 197 residues long: Imidazoleglycerol-phosphate dehydratase (197 aa).

This sequence belongs to the imidazoleglycerol-phosphate dehydratase family.

Its subcellular location is the cytoplasm. The enzyme catalyses D-erythro-1-(imidazol-4-yl)glycerol 3-phosphate = 3-(imidazol-4-yl)-2-oxopropyl phosphate + H2O. Its pathway is amino-acid biosynthesis; L-histidine biosynthesis; L-histidine from 5-phospho-alpha-D-ribose 1-diphosphate: step 6/9. The polypeptide is Imidazoleglycerol-phosphate dehydratase (Methanocaldococcus jannaschii (strain ATCC 43067 / DSM 2661 / JAL-1 / JCM 10045 / NBRC 100440) (Methanococcus jannaschii)).